We begin with the raw amino-acid sequence, 273 residues long: MKPTRPNTDIPAWLQTTTTTPTPAIKAKFWQRNQRHLRQLLSRLAQPAPVTATSHWRVAPQFKLIQLLLLVILIALSNNLILLWSLALLVGCQLLWLPPRQLRRFMGSWLISVGMAMLFVLPSYWLAGPTTLLFFGLKTSLMLANAQYYRLTTPFQDLLAGLKALHCPDLLIMTLAIAITYLRMLGQHLLLTMEALELRTVAPTAHPYRLIGALFGNLYLKSYTYALELYAAMEARGFNGHYVRSTGRRTHWRDYLALSPAIIVWILFIFWRH.

Transmembrane regions (helical) follow at residues Leu64–Trp84, Met117–Leu137, Leu159–Ile179, Leu210–Tyr230, and His251–Trp271.

The protein belongs to the CbiQ family. In terms of assembly, may form an energy-coupling factor (ECF) transporter complex composed of an ATP-binding protein (A component, LarO), a transmembrane protein (T component, LarQ) and a fused possible substrate-capture protein (S component, LarMN) of unknown stoichiometry.

It localises to the cell membrane. In terms of biological role, probable transmembrane component of the energy-coupling factor (ECF) transporter complex LarMNQO involved in nickel import. In Lactiplantibacillus plantarum (strain ATCC BAA-793 / NCIMB 8826 / WCFS1) (Lactobacillus plantarum), this protein is Nickel permease LarQ.